The sequence spans 244 residues: Small ribosomal subunit protein uS2 (244 aa).

The disordered stretch occupies residues G224 to E244. Positions D229–E244 are enriched in acidic residues.

It belongs to the universal ribosomal protein uS2 family.

This is Small ribosomal subunit protein uS2 from Desulfitobacterium hafniense (strain DSM 10664 / DCB-2).